The chain runs to 440 residues: Glycerophosphocholine cholinephosphodiesterase ENPP6 (440 aa).

The N-terminal stretch at 1 to 22 (MAVKLGTLLLALALGLAQPASA) is a signal peptide. Residues Asp-32, Ser-71, and Asn-92 each contribute to the substrate site. Zn(2+) contacts are provided by Asp-32 and Ser-71. Residue Ser-71 is the Nucleophile of the active site. Residue Ser-71 is modified to Phosphoserine. N-linked (GlcNAc...) asparagine glycans are attached at residues Asn-100 and Asn-118. A disulfide bond links Cys-142 and Cys-154. Asp-193 is a binding site for substrate. Zn(2+) is bound by residues Asp-193, His-197, Asp-240, and His-241. His-241 is a binding site for substrate. Asn-341 is a glycosylation site (N-linked (GlcNAc...) asparagine). Residue His-354 participates in substrate binding. His-354 is a binding site for Zn(2+). A glycan (N-linked (GlcNAc...) asparagine) is linked at Asn-404. A lipid anchor (GPI-anchor amidated alanine) is attached at Ala-418. The propeptide at 419–440 (GTTPPVQPSHCALALILLFLLA) is removed in mature form.

This sequence belongs to the nucleotide pyrophosphatase/phosphodiesterase family. Homodimer; disulfide-linked. Homotetramer. Requires Zn(2+) as cofactor.

Its subcellular location is the cell membrane. The enzyme catalyses sn-glycerol 3-phosphocholine + H2O = phosphocholine + glycerol + H(+). The catalysed reaction is a 1-acyl-sn-glycero-3-phosphocholine + H2O = a 1-acyl-sn-glycerol + phosphocholine + H(+). It carries out the reaction a 1-O-alkyl-sn-glycero-3-phosphocholine + H2O = a 1-O-alkyl-sn-glycerol + phosphocholine + H(+). It catalyses the reaction 1-dodecanoyl-sn-glycero-3-phosphocholine + H2O = 1-dodecanoyl-sn-glycerol + phosphocholine + H(+). The enzyme catalyses 1-hexadecanoyl-sn-glycero-3-phosphocholine + H2O = 1-hexadecanoyl-sn-glycerol + phosphocholine + H(+). The catalysed reaction is 1-(5Z,8Z,11Z,14Z-eicosatetraenoyl)-sn-glycero-3-phosphocholine + H2O = 1-(5Z,8Z,11Z,14Z-eicosatetraenoyl)-sn-glycerol + phosphocholine + H(+). It carries out the reaction 1-tetradecanoyl-sn-glycero-3-phosphocholine + H2O = 1-tetradecanoyl-sn-glycerol + phosphocholine + H(+). It catalyses the reaction sphing-4-enine-phosphocholine + H2O = sphing-4-enine + phosphocholine + H(+). The enzyme catalyses 1-(9Z-octadecenoyl)-sn-glycero-3-phosphocholine + H2O = 1-(9Z-octadecenoyl)-sn-glycerol + phosphocholine + H(+). The catalysed reaction is 1-(9Z,12Z)-octadecadienoyl-sn-glycero-3-phosphocholine + H2O = 1-(9Z,12Z-octadecadienoyl)-sn-glycerol + phosphocholine + H(+). It carries out the reaction glycero-2-phosphocholine + H2O = phosphocholine + glycerol + H(+). With respect to regulation, inhibited by EDTA and EGTA in vitro. Functionally, choline-specific glycerophosphodiesterase that hydrolyzes glycerophosphocholine (GPC) and lysophosphatidylcholine (LPC) and contributes to supplying choline to the cells. Has a preference for LPC with short (12:0 and 14:0) or polyunsaturated (18:2 and 20:4) fatty acids. In vitro, hydrolyzes only choline-containing lysophospholipids, such as sphingosylphosphorylcholine (SPC), platelet-activating factor (PAF) and lysoPAF, but not other lysophospholipids. The sequence is that of Glycerophosphocholine cholinephosphodiesterase ENPP6 from Pongo abelii (Sumatran orangutan).